The sequence spans 232 residues: Somatolactin (232 aa).

The signal sequence occupies residues 1 to 16 (MHNWKGVWLCSLFLTF). Cystine bridges form between Cys31/Cys41, Cys91/Cys206, and Cys223/Cys231. An N-linked (GlcNAc...) asparagine glycan is attached at Asn147.

It belongs to the somatotropin/prolactin family. Pituitary gland.

The protein resides in the secreted. The sequence is that of Somatolactin from Protopterus annectens (African lungfish).